The primary structure comprises 267 residues: MQEFTNPFPIGSSSLIHCMTNEISCEMLANGILALGCKPVMADDSREVLDFTKQSQALFINLGHLSAEKEKAIRMAASYANQSSLPMVVDAVGVTTSSIRKSLVKDLLDYRPTVLKGNMSEIRSLVGLKHHGVGVDASAKDQETEDLLQVLKDWCQTYPGMSFLVTGPKDLIVSKNQVAVLENGCTELDWITGTGDLVGALTAVFLSQGKTGFEASCLAVSYLNIAAEKIVVQGMGLEEFRYQVLNQLSLLRRDENWLDTIKGEVYE.

Methionine 41 contributes to the substrate binding site. 2 residues coordinate ATP: lysine 116 and threonine 166. Glycine 193 serves as a coordination point for substrate.

It belongs to the Thz kinase family. It depends on Mg(2+) as a cofactor.

It catalyses the reaction 5-(2-hydroxyethyl)-4-methylthiazole + ATP = 4-methyl-5-(2-phosphooxyethyl)-thiazole + ADP + H(+). Its pathway is cofactor biosynthesis; thiamine diphosphate biosynthesis; 4-methyl-5-(2-phosphoethyl)-thiazole from 5-(2-hydroxyethyl)-4-methylthiazole: step 1/1. Its function is as follows. Catalyzes the phosphorylation of the hydroxyl group of 4-methyl-5-beta-hydroxyethylthiazole (THZ). This is Hydroxyethylthiazole kinase 2 from Streptococcus pneumoniae (strain Hungary19A-6).